The chain runs to 209 residues: C-type lectin domain family 6 member A (209 aa).

The Cytoplasmic segment spans residues 1–20 (MMQEQQPQSTEKRGWLSLRL). A helical; Signal-anchor for type II membrane protein transmembrane segment spans residues 21-41 (WSVAGISIALLSACFIVSCVV). Over 42 to 209 (TYHFTYGETG…SICEMNKIYL (168 aa)) the chain is Extracellular. 4 disulfides stabilise this stretch: Cys66/Cys78, Cys79/Cys90, Cys107/Cys202, and Cys176/Cys194. A C-type lectin domain is found at 86–203 (FGSSCYFISS…CETRRNSICE (118 aa)). Ca(2+) contacts are provided by Val116, Asn118, and Glu122. An N-linked (GlcNAc...) asparagine glycan is attached at Asn131. Ca(2+) is bound by residues Glu168, Asn170, and Glu174. Residues 168–170 (EPN), Glu174, Trp182, 190–191 (ND), and Arg198 each bind alpha-D-mannopyranose. Residue Asn170 is glycosylated (N-linked (GlcNAc...) asparagine). Positions 190 and 191 each coordinate Ca(2+). Ca(2+) is bound at residue Glu203.

As to quaternary structure, associated with FCER1G. Heterodimer with CLEC4D; this heterodimer forms a pattern recognition receptor (PRR) against fungal infection. As to expression, expressed in lung, spleen, lymph node, leukocytes, bone marrow, tonsils and dendritic cells. Strongly expressed in purified monocytes and weakly in B-cells. In peripheral blood cells, preferentially expressed in plasmacytoids rather than myeloids.

The protein resides in the cell membrane. Its function is as follows. Calcium-dependent lectin that acts as a pattern recognition receptor (PRR) of the innate immune system: specifically recognizes and binds alpha-mannans on C.albicans hypheas. Binding of C.albicans alpha-mannans to this receptor complex leads to phosphorylation of the immunoreceptor tyrosine-based activation motif (ITAM) of FCER1G, triggering activation of SYK, CARD9 and NF-kappa-B, consequently driving maturation of antigen-presenting cells and shaping antigen-specific priming of T-cells toward effector T-helper 1 and T-helper 17 cell subtypes. Recognizes also, in a mannose-dependent manner, allergens from house dust mite and fungi, by promoting cysteinyl leukotriene production. Recognizes soluble elements from the eggs of Shistosoma mansoni altering adaptive immune responses. The protein is C-type lectin domain family 6 member A of Homo sapiens (Human).